The sequence spans 614 residues: UvrABC system protein C (614 aa).

Residues 20-98 (TAPGVYRMYA…IKSLSPRYNV (79 aa)) enclose the GIY-YIG domain. Residues 207 to 242 (DELTRELGEQMQAASEALEFEQAARLRDLISSLRSM) form the UVR domain.

Belongs to the UvrC family. Interacts with UvrB in an incision complex.

It is found in the cytoplasm. Its function is as follows. The UvrABC repair system catalyzes the recognition and processing of DNA lesions. UvrC both incises the 5' and 3' sides of the lesion. The N-terminal half is responsible for the 3' incision and the C-terminal half is responsible for the 5' incision. The chain is UvrABC system protein C from Stenotrophomonas maltophilia (strain K279a).